Reading from the N-terminus, the 409-residue chain is tRNA(Met) cytidine acetate ligase (409 aa).

Residues 7–20 (VVEYNPMHNGHLYH), Gly-102, Asn-169, and Arg-194 contribute to the ATP site.

It belongs to the TmcAL family.

It is found in the cytoplasm. It carries out the reaction cytidine(34) in elongator tRNA(Met) + acetate + ATP = N(4)-acetylcytidine(34) in elongator tRNA(Met) + AMP + diphosphate. Its function is as follows. Catalyzes the formation of N(4)-acetylcytidine (ac(4)C) at the wobble position of elongator tRNA(Met), using acetate and ATP as substrates. First activates an acetate ion to form acetyladenylate (Ac-AMP) and then transfers the acetyl group to tRNA to form ac(4)C34. In Clostridium botulinum (strain Langeland / NCTC 10281 / Type F), this protein is tRNA(Met) cytidine acetate ligase.